Here is a 599-residue protein sequence, read N- to C-terminus: Aspartate--tRNA(Asp/Asn) ligase (599 aa).

Glu180 serves as a coordination point for L-aspartate. The aspartate stretch occupies residues 204-207 (QLLK). Position 226 (Arg226) interacts with L-aspartate. Residues 226–228 (RDE) and Gln235 contribute to the ATP site. An L-aspartate-binding site is contributed by His457. Glu491 serves as a coordination point for ATP. L-aspartate is bound at residue Arg498. 543–546 (GWDR) is a binding site for ATP. Residues 565–599 (KAGGGRDPLTGAPAPISDEQRAETGVDYDPDADEN) form a disordered region. Residues 590–599 (VDYDPDADEN) are compositionally biased toward acidic residues.

It belongs to the class-II aminoacyl-tRNA synthetase family. Type 1 subfamily. As to quaternary structure, homodimer.

It localises to the cytoplasm. It catalyses the reaction tRNA(Asx) + L-aspartate + ATP = L-aspartyl-tRNA(Asx) + AMP + diphosphate. In terms of biological role, aspartyl-tRNA synthetase with relaxed tRNA specificity since it is able to aspartylate not only its cognate tRNA(Asp) but also tRNA(Asn). Reaction proceeds in two steps: L-aspartate is first activated by ATP to form Asp-AMP and then transferred to the acceptor end of tRNA(Asp/Asn). The chain is Aspartate--tRNA(Asp/Asn) ligase from Bifidobacterium longum (strain NCC 2705).